The chain runs to 743 residues: Phosphoribosylformylglycinamidine synthase subunit PurL (743 aa).

Residue histidine 54 is part of the active site. ATP is bound by residues tyrosine 57 and lysine 96. Glutamate 98 lines the Mg(2+) pocket. Residues 99–102 (SHNH) and arginine 121 contribute to the substrate site. Catalysis depends on histidine 100, which acts as the Proton acceptor. Residue aspartate 122 coordinates Mg(2+). Substrate is bound at residue glutamine 245. A Mg(2+)-binding site is contributed by aspartate 273. 317–319 (ESQ) lines the substrate pocket. 2 residues coordinate ATP: aspartate 500 and glycine 537. A Mg(2+)-binding site is contributed by asparagine 538. Substrate is bound at residue serine 540.

Belongs to the FGAMS family. In terms of assembly, monomer. Part of the FGAM synthase complex composed of 1 PurL, 1 PurQ and 2 PurS subunits.

It localises to the cytoplasm. It catalyses the reaction N(2)-formyl-N(1)-(5-phospho-beta-D-ribosyl)glycinamide + L-glutamine + ATP + H2O = 2-formamido-N(1)-(5-O-phospho-beta-D-ribosyl)acetamidine + L-glutamate + ADP + phosphate + H(+). It functions in the pathway purine metabolism; IMP biosynthesis via de novo pathway; 5-amino-1-(5-phospho-D-ribosyl)imidazole from N(2)-formyl-N(1)-(5-phospho-D-ribosyl)glycinamide: step 1/2. Part of the phosphoribosylformylglycinamidine synthase complex involved in the purines biosynthetic pathway. Catalyzes the ATP-dependent conversion of formylglycinamide ribonucleotide (FGAR) and glutamine to yield formylglycinamidine ribonucleotide (FGAM) and glutamate. The FGAM synthase complex is composed of three subunits. PurQ produces an ammonia molecule by converting glutamine to glutamate. PurL transfers the ammonia molecule to FGAR to form FGAM in an ATP-dependent manner. PurS interacts with PurQ and PurL and is thought to assist in the transfer of the ammonia molecule from PurQ to PurL. This is Phosphoribosylformylglycinamidine synthase subunit PurL from Bacillus pumilus (strain SAFR-032).